We begin with the raw amino-acid sequence, 151 residues long: RNA polymerase-binding transcription factor DksA (151 aa).

The stretch at 34–54 (EAQLSHFKRILEAWRNQLRDE) forms a coiled coil. Zn(2+)-binding residues include Cys114, Cys117, Cys135, and Cys138. The segment at 114–138 (CESCGVEIGIRRLEARPTADLCIDC) adopts a dksA C4-type zinc-finger fold.

Belongs to the DksA family. In terms of assembly, interacts directly with the RNA polymerase.

It is found in the cytoplasm. In terms of biological role, transcription factor that acts by binding directly to the RNA polymerase (RNAP). Required for negative regulation of rRNA expression and positive regulation of several amino acid biosynthesis promoters. Also required for regulation of fis expression. This chain is RNA polymerase-binding transcription factor DksA, found in Salmonella typhi.